The primary structure comprises 429 residues: D-amino acid dehydrogenase (429 aa).

FAD is bound at residue 3-17; sequence VVVLGSGVVGVTSAY.

Belongs to the DadA oxidoreductase family. FAD serves as cofactor.

It catalyses the reaction a D-alpha-amino acid + A + H2O = a 2-oxocarboxylate + AH2 + NH4(+). It participates in amino-acid degradation; D-alanine degradation; NH(3) and pyruvate from D-alanine: step 1/1. Functionally, oxidative deamination of D-amino acids. The polypeptide is D-amino acid dehydrogenase (Paraburkholderia xenovorans (strain LB400)).